A 293-amino-acid polypeptide reads, in one-letter code: Glutamyl-Q tRNA(Asp) synthetase (293 aa).

L-glutamate is bound by residues 8–12 (RFAPT) and glutamate 44. A 'HIGH' region motif is present at residues 11–21 (PTPSGYLHFGS). The Zn(2+) site is built by cysteine 100, cysteine 102, tyrosine 114, and cysteine 118. Tyrosine 171 and arginine 189 together coordinate L-glutamate. Residues 227–231 (KLGKS) carry the 'KMSKS' region motif. Residue lysine 230 participates in ATP binding.

Belongs to the class-I aminoacyl-tRNA synthetase family. GluQ subfamily. Zn(2+) serves as cofactor.

Its function is as follows. Catalyzes the tRNA-independent activation of glutamate in presence of ATP and the subsequent transfer of glutamate onto a tRNA(Asp). Glutamate is transferred on the 2-amino-5-(4,5-dihydroxy-2-cyclopenten-1-yl) moiety of the queuosine in the wobble position of the QUC anticodon. This chain is Glutamyl-Q tRNA(Asp) synthetase, found in Pseudomonas aeruginosa (strain LESB58).